Reading from the N-terminus, the 339-residue chain is Glycerol-3-phosphate dehydrogenase [NAD(P)+] (339 aa).

NADPH-binding residues include Ser-15, Tyr-16, His-36, and Lys-110. Lys-110, Gly-139, and Thr-141 together coordinate sn-glycerol 3-phosphate. Residue Ala-143 coordinates NADPH. Sn-glycerol 3-phosphate is bound by residues Lys-195, Asp-248, Ser-258, Arg-259, and Asn-260. The active-site Proton acceptor is Lys-195. NADPH is bound at residue Arg-259. Residues Val-283 and Glu-285 each contribute to the NADPH site.

This sequence belongs to the NAD-dependent glycerol-3-phosphate dehydrogenase family.

The protein localises to the cytoplasm. It catalyses the reaction sn-glycerol 3-phosphate + NAD(+) = dihydroxyacetone phosphate + NADH + H(+). The catalysed reaction is sn-glycerol 3-phosphate + NADP(+) = dihydroxyacetone phosphate + NADPH + H(+). It functions in the pathway membrane lipid metabolism; glycerophospholipid metabolism. In terms of biological role, catalyzes the reduction of the glycolytic intermediate dihydroxyacetone phosphate (DHAP) to sn-glycerol 3-phosphate (G3P), the key precursor for phospholipid synthesis. This chain is Glycerol-3-phosphate dehydrogenase [NAD(P)+], found in Pectobacterium carotovorum subsp. carotovorum (strain PC1).